A 128-amino-acid polypeptide reads, in one-letter code: MPTQPSKELERIPNPKPERDYEIEITTNEFTCVCPRTGQPDFATITIRYVPDQWIVELKSLKLYLWSYRNEGHYHEEVTNTILDDLVRTLEPRRMTVIADFNIRGGLHTVVTARYERTAEGPARLAAD.

The active-site Thioimide intermediate is the cysteine 34. Aspartate 41 serves as the catalytic Proton donor. Substrate-binding positions include 56 to 58 and 75 to 76; these read VEL and HE.

It belongs to the GTP cyclohydrolase I family. QueF type 1 subfamily.

It localises to the cytoplasm. It carries out the reaction 7-aminomethyl-7-carbaguanine + 2 NADP(+) = 7-cyano-7-deazaguanine + 2 NADPH + 3 H(+). It participates in tRNA modification; tRNA-queuosine biosynthesis. Catalyzes the NADPH-dependent reduction of 7-cyano-7-deazaguanine (preQ0) to 7-aminomethyl-7-deazaguanine (preQ1). This chain is NADPH-dependent 7-cyano-7-deazaguanine reductase, found in Thermomicrobium roseum (strain ATCC 27502 / DSM 5159 / P-2).